The chain runs to 224 residues: Orotate phosphoribosyltransferase (224 aa).

5-phospho-alpha-D-ribose 1-diphosphate contacts are provided by residues K26, 73–74 (YK), R100, K101, K104, H106, and 127–135 (EDVTTAGTS). Orotate contacts are provided by T131 and R160.

The protein belongs to the purine/pyrimidine phosphoribosyltransferase family. PyrE subfamily. Homodimer. It depends on Mg(2+) as a cofactor.

The catalysed reaction is orotidine 5'-phosphate + diphosphate = orotate + 5-phospho-alpha-D-ribose 1-diphosphate. It functions in the pathway pyrimidine metabolism; UMP biosynthesis via de novo pathway; UMP from orotate: step 1/2. In terms of biological role, catalyzes the transfer of a ribosyl phosphate group from 5-phosphoribose 1-diphosphate to orotate, leading to the formation of orotidine monophosphate (OMP). The polypeptide is Orotate phosphoribosyltransferase (Clostridium beijerinckii (strain ATCC 51743 / NCIMB 8052) (Clostridium acetobutylicum)).